The chain runs to 251 residues: Small ribosomal subunit protein uS2 (251 aa).

Belongs to the universal ribosomal protein uS2 family.

This is Small ribosomal subunit protein uS2 (rpsB) from Arthrospira platensis (Spirulina platensis).